The following is a 358-amino-acid chain: Heterogeneous nuclear ribonucleoprotein A2 homolog 2 (358 aa).

RRM domains lie at 9–92 (RKLF…ESAK) and 100–179 (KKLF…LSKQ). Disordered stretches follow at residues 182 to 217 (QDVQ…FRGG) and 333 to 358 (YGGG…RNRY). Residues 193–217 (GNFGFGDSRGGGNFGSGPGGNFRGG) are compositionally biased toward gly residues. The nuclear targeting sequence stretch occupies residues 309 to 352 (QQSSSYGPMKSGGNFGGNRSMGGPYGGGNYGPGNGSGASGGGGY).

Its subcellular location is the nucleus. Functionally, forms complexes (ribonucleosomes) with at least 20 other different hnRNP and heterogeneous nuclear RNA in the nucleus. In Xenopus laevis (African clawed frog), this protein is Heterogeneous nuclear ribonucleoprotein A2 homolog 2.